Reading from the N-terminus, the 312-residue chain is Malate dehydrogenase (312 aa).

NAD(+)-binding positions include 7 to 13 and aspartate 34; that span reads GAAGGIG. The substrate site is built by arginine 81 and arginine 87. Residues asparagine 94 and 117-119 each bind NAD(+); that span reads ITN. The substrate site is built by asparagine 119 and arginine 153. Residue histidine 177 is the Proton acceptor of the active site. Methionine 227 contributes to the NAD(+) binding site.

This sequence belongs to the LDH/MDH superfamily. MDH type 1 family. Homodimer.

The catalysed reaction is (S)-malate + NAD(+) = oxaloacetate + NADH + H(+). Its function is as follows. Catalyzes the reversible oxidation of malate to oxaloacetate. In Klebsiella pneumoniae subsp. pneumoniae (strain ATCC 700721 / MGH 78578), this protein is Malate dehydrogenase (mdh).